Here is a 429-residue protein sequence, read N- to C-terminus: 3-phosphoshikimate 1-carboxyvinyltransferase (429 aa).

3-phosphoshikimate-binding residues include Lys-22, Ser-23, and Arg-27. Lys-22 lines the phosphoenolpyruvate pocket. Gly-94 and Arg-122 together coordinate phosphoenolpyruvate. The 3-phosphoshikimate site is built by Ser-167, Gln-169, Asp-315, and Lys-342. Gln-169 serves as a coordination point for phosphoenolpyruvate. Asp-315 acts as the Proton acceptor in catalysis. Positions 346 and 388 each coordinate phosphoenolpyruvate.

This sequence belongs to the EPSP synthase family. In terms of assembly, monomer.

Its subcellular location is the cytoplasm. It carries out the reaction 3-phosphoshikimate + phosphoenolpyruvate = 5-O-(1-carboxyvinyl)-3-phosphoshikimate + phosphate. It participates in metabolic intermediate biosynthesis; chorismate biosynthesis; chorismate from D-erythrose 4-phosphate and phosphoenolpyruvate: step 6/7. In terms of biological role, catalyzes the transfer of the enolpyruvyl moiety of phosphoenolpyruvate (PEP) to the 5-hydroxyl of shikimate-3-phosphate (S3P) to produce enolpyruvyl shikimate-3-phosphate and inorganic phosphate. The chain is 3-phosphoshikimate 1-carboxyvinyltransferase from Geotalea daltonii (strain DSM 22248 / JCM 15807 / FRC-32) (Geobacter daltonii).